We begin with the raw amino-acid sequence, 366 residues long: Chorismate synthase (366 aa).

Residue Arg-48 coordinates NADP(+). Residues 125 to 127 (RSS), 238 to 239 (NA), Gly-278, 293 to 297 (KPTSS), and Arg-319 contribute to the FMN site.

Belongs to the chorismate synthase family. Homotetramer. The cofactor is FMNH2.

The enzyme catalyses 5-O-(1-carboxyvinyl)-3-phosphoshikimate = chorismate + phosphate. The protein operates within metabolic intermediate biosynthesis; chorismate biosynthesis; chorismate from D-erythrose 4-phosphate and phosphoenolpyruvate: step 7/7. Catalyzes the anti-1,4-elimination of the C-3 phosphate and the C-6 proR hydrogen from 5-enolpyruvylshikimate-3-phosphate (EPSP) to yield chorismate, which is the branch point compound that serves as the starting substrate for the three terminal pathways of aromatic amino acid biosynthesis. This reaction introduces a second double bond into the aromatic ring system. In Hydrogenovibrio crunogenus (strain DSM 25203 / XCL-2) (Thiomicrospira crunogena), this protein is Chorismate synthase.